A 450-amino-acid polypeptide reads, in one-letter code: 3',5'-cyclic-AMP phosphodiesterase 7B (450 aa).

The PDEase domain maps to 97–420 (LDEDYLGQAR…AQWKSLLPRQ (324 aa)). His-173 (proton donor) is an active-site residue. 4 residues coordinate a divalent metal cation: His-177, His-213, Asp-214, and Asp-323. Residues 418 to 450 (PRQHRSRGSSGSGPDHDHAGQGTESEEQEGDSP) form a disordered region. Ser-426 carries the post-translational modification Phosphoserine. Acidic residues predominate over residues 441–450 (ESEEQEGDSP).

The protein belongs to the cyclic nucleotide phosphodiesterase family. PDE7 subfamily. It depends on a divalent metal cation as a cofactor. Highly expressed in brain. Also expressed in heart, liver, skeletal muscle and pancreas.

It carries out the reaction 3',5'-cyclic AMP + H2O = AMP + H(+). Its pathway is purine metabolism; 3',5'-cyclic AMP degradation; AMP from 3',5'-cyclic AMP: step 1/1. With respect to regulation, inhibited by dipyridamole, IBMX and SCH 51866. Insensitive to zaprinast, rolipram, and milrinone. Hydrolyzes the second messenger cAMP, which is a key regulator of many important physiological processes. May be involved in the control of cAMP-mediated neural activity and cAMP metabolism in the brain. This is 3',5'-cyclic-AMP phosphodiesterase 7B from Homo sapiens (Human).